Reading from the N-terminus, the 170-residue chain is Acetyl-CoA decarbonylase/synthase complex subunit epsilon 1 (170 aa).

The protein belongs to the CdhB family. Heterotetramer of two alpha and two epsilon subunits. The ACDS complex is made up of alpha, epsilon, beta, gamma and delta subunits with a probable stoichiometry of (alpha(2)epsilon(2))(4)-beta(8)-(gamma(1)delta(1))(8).

It functions in the pathway one-carbon metabolism; methanogenesis from acetate. In terms of biological role, part of a complex that catalyzes the reversible cleavage of acetyl-CoA, allowing growth on acetate as sole source of carbon and energy. The alpha-epsilon subcomponent functions as a carbon monoxide dehydrogenase. The precise role of the epsilon subunit is unclear; it may have a stabilizing role within the alpha(2)epsilon(2) component and/or be involved in electron transfer to FAD during a potential FAD-mediated CO oxidation. This is Acetyl-CoA decarbonylase/synthase complex subunit epsilon 1 (cdhB1) from Methanosarcina acetivorans (strain ATCC 35395 / DSM 2834 / JCM 12185 / C2A).